The primary structure comprises 161 residues: Nucleotide-binding protein Pcar_0033 (161 aa).

Belongs to the YajQ family.

Functionally, nucleotide-binding protein. The polypeptide is Nucleotide-binding protein Pcar_0033 (Syntrophotalea carbinolica (strain DSM 2380 / NBRC 103641 / GraBd1) (Pelobacter carbinolicus)).